The chain runs to 101 residues: Small ribosomal subunit protein uS14A (101 aa).

Residues 32–71 are disordered; it reads RRPGTPEPERNRAVEELRRQPRDASATRVRNRDSVDGRPR. Basic and acidic residues-rich tracts occupy residues 38–53 and 61–70; these read EPERNRAVEELRRQPR and RNRDSVDGRP.

This sequence belongs to the universal ribosomal protein uS14 family. Part of the 30S ribosomal subunit. Contacts proteins S3 and S10.

Binds 16S rRNA, required for the assembly of 30S particles and may also be responsible for determining the conformation of the 16S rRNA at the A site. The chain is Small ribosomal subunit protein uS14A from Streptomyces griseus subsp. griseus (strain JCM 4626 / CBS 651.72 / NBRC 13350 / KCC S-0626 / ISP 5235).